The sequence spans 151 residues: UPF0178 protein Tcr_1995 (151 aa).

Residues 116–135 (RSSGVDTGGPPPLNQKDRQA) are disordered.

This sequence belongs to the UPF0178 family.

This Hydrogenovibrio crunogenus (strain DSM 25203 / XCL-2) (Thiomicrospira crunogena) protein is UPF0178 protein Tcr_1995.